The primary structure comprises 217 residues: Probable transaldolase (217 aa).

The Schiff-base intermediate with substrate role is filled by K83.

This sequence belongs to the transaldolase family. Type 3B subfamily.

The protein resides in the cytoplasm. It catalyses the reaction D-sedoheptulose 7-phosphate + D-glyceraldehyde 3-phosphate = D-erythrose 4-phosphate + beta-D-fructose 6-phosphate. It functions in the pathway carbohydrate degradation; pentose phosphate pathway; D-glyceraldehyde 3-phosphate and beta-D-fructose 6-phosphate from D-ribose 5-phosphate and D-xylulose 5-phosphate (non-oxidative stage): step 2/3. Functionally, transaldolase is important for the balance of metabolites in the pentose-phosphate pathway. This Bartonella quintana (strain Toulouse) (Rochalimaea quintana) protein is Probable transaldolase.